The chain runs to 350 residues: Salicylate decarboxylase (350 aa).

It belongs to the metallo-dependent hydrolases superfamily. As to quaternary structure, homotetramer.

It carries out the reaction salicylate + H(+) = phenol + CO2. Inhibited by AgNO(3), HgCl(2), p-chloromercuribenzoic acid and NiCl(2). Functionally, reversibly catalyzes the regioselective carboxylation of phenol to form salicylic acid. Involved in a pathway for the degradation of salicylate via phenol. Also catalyzes the decarboxylation of beta-resorcylic acid (2,4-dihydroxybenzoic acid) into resorcinol (1,3-dihydroxybenzene), gamma-resorcylic acid (2,6-dihydroxybenzoic acid) into resorcinol, 2,3-dihydroxybenzoic acid into catechol (1,2-dihydroxybenzene), and 4-aminosalicylic acid into 3-aminophenol. The polypeptide is Salicylate decarboxylase (Cutaneotrichosporon moniliiforme (Yeast)).